The sequence spans 199 residues: Recombination protein RecR (199 aa).

The C4-type zinc-finger motif lies at 58 to 73 (CSICNNITDVDPCTYC). The Toprim domain maps to 81–176 (QVICVVEEPT…RVTRIATGVP (96 aa)).

It belongs to the RecR family.

Functionally, may play a role in DNA repair. It seems to be involved in an RecBC-independent recombinational process of DNA repair. It may act with RecF and RecO. This chain is Recombination protein RecR, found in Koribacter versatilis (strain Ellin345).